The primary structure comprises 66 residues: Opicalcin-2 (66 aa).

The N-terminal stretch at 1 to 22 (MKPSLIIVTFIVVFMTISCVAA) is a signal peptide. Positions 23-31 (DDEQETWIE) are excised as a propeptide. Disulfide bonds link cysteine 36/cysteine 50, cysteine 43/cysteine 54, and cysteine 49/cysteine 65. The segment at 55 to 57 (KRR) is essential for stimulation of [3H]ryanodine binding to RYR1.

This sequence belongs to the scorpion calcin family. In terms of tissue distribution, expressed by the venom gland.

The protein resides in the secreted. Functionally, this toxin stabilizes ryanodine receptor 1 (RyR1) opening in a long-lasting subconductance state (40% of the full conductance state). Furthermore, it triggers calcium release from sarcoplasmic vesicles (64.2 nM are enough to induce a sharp release, and 50% of the total calcium is released after toxin (100 nM) addition) probably by acting as a cell-penetrating peptide (CPP). In addition, it has been shown to dose-dependently stimulate ryanodine binding to RyR1 (EC(50)=3.2 nM). It also augments the bell-shaped calcium-[3H]ryanodine binding curve that is maximal at about 10 uM calcium concentration. It binds a different site as ryanodine. It acts synergistically with caffeine. In vivo, intracerebroventricular injection into mice induces neurotoxic symptoms, followed by death. The chain is Opicalcin-2 from Opistophthalmus carinatus (African yellow leg scorpion).